The sequence spans 122 residues: Basic phospholipase A2 homolog myotoxin II (122 aa).

7 disulfides stabilise this stretch: cysteine 26/cysteine 116, cysteine 28/cysteine 44, cysteine 43/cysteine 95, cysteine 49/cysteine 122, cysteine 50/cysteine 88, cysteine 57/cysteine 81, and cysteine 75/cysteine 86. Positions 105-118 (KKYRYNYLKPFCKK) are important for membrane-damaging activities in eukaryotes and bacteria; heparin-binding.

This sequence belongs to the phospholipase A2 family. Group II subfamily. K49 sub-subfamily. Homodimer; non-covalently linked (probable alternative/compact dimer conformation). In terms of tissue distribution, expressed by the venom gland.

It is found in the secreted. Myotoxic activity is inhibited by suramin and rosmarinic acid. Cytotoxic and myotoxic activities are inhibited by pre-incubation with varespladib. Suramin inhibits this myotoxin by (i) direct blockage of the MDoS and MDiS, preventing the toxin/membrane interaction and disruption and (ii) formation of an oligomeric complex, resulting in a tetrameric configuration for which both MDoS and MDiS becomes physically inaccessible, thus avoiding any possibility of toxin-membrane interaction or disruption. Heparin completely inhibits the cytotoxic and bactericidal activities, but only partially the myotoxic, edema-inducing and lethal effects. Its function is as follows. Snake venom phospholipase A2 (PLA2) homolog that lacks enzymatic activity. Shows high myotoxin activities. Also shows neurotoxicity, since it induces muscle paralysis when tested on mouse phrenic-diaphragm preparations. Displays edema-inducing activities. Also displays antimicrobial activity against E.coli and C.albicans, as well as antitumoral activity against some human and mice cell lines. In addition, it is effective as parasiticidal agent against Leishmania sp. and S.mansoni. It also disrupts negatively charged liposomes in a dose- and temperature-dependent manner and shows toxicity by intraperitoneal route. In contrast to other phospholipase A2-like toxins, this myotoxin does not require fatty acid binding to be active. This Bothrops moojeni (Lance-headed viper) protein is Basic phospholipase A2 homolog myotoxin II.